A 94-amino-acid polypeptide reads, in one-letter code: Phosphoribosyl-ATP pyrophosphatase (94 aa).

Belongs to the PRA-PH family.

The protein localises to the cytoplasm. It carries out the reaction 1-(5-phospho-beta-D-ribosyl)-ATP + H2O = 1-(5-phospho-beta-D-ribosyl)-5'-AMP + diphosphate + H(+). The protein operates within amino-acid biosynthesis; L-histidine biosynthesis; L-histidine from 5-phospho-alpha-D-ribose 1-diphosphate: step 2/9. This chain is Phosphoribosyl-ATP pyrophosphatase, found in Pyrobaculum islandicum (strain DSM 4184 / JCM 9189 / GEO3).